The chain runs to 584 residues: MSQVIEPQLDRTTYYSILGLTSNATSSEVHKSYLKLARLLHPDKTKSDKSEELFKAVVHAHSILTDEDQKLRYDRDLKIKGLHTYQPKKNCHIFKTKAKESQGASPTLGQSEAYHRQNKPYEQQPYGFGVGKKMTSSSKSKVPIFKSFNLKSYQRNHYYSSKKERKHGSPDIDSLFHETNGASKVRMTDAGKMDTNSQFQEIWEILGKNVYTHKSYSEDPNSCLGSALSDHEEEEEEAGKQQQQQQQQQQQQQHYGMTSKSSSPDEEQKDNKESKRESRVSPEENGEEETGHKQFKLPKTSTFSSGSHDSNLQSPFYNHEYRHYARSKFECKNQFRKSVSPIKEIPATTSTNEGWNILRDIIEKLNISNVDDRNKDLLFRRDEIGDKNHSDSIDIENLSIKEPKGMKRRKKDDISLEELFQSLPREKDYFMMDAINDSLESINLFKKPKTTQSHEQGGTFAQAESNRAKFKPLLEQCGITPEILDLQIPEIPEFDAVADLETLKLNVQLFNNQCNKLKETIHQVSLQRLRADTQFSDMLTQKQSIMVWKTYLEFDKSLMDKLNILQERQMQVIKIFSERCDGKV.

The region spanning 13–77 (TYYSILGLTS…DQKLRYDRDL (65 aa)) is the J domain. The segment at 216 to 312 (YSEDPNSCLG…FSSGSHDSNL (97 aa)) is disordered. Phosphoserine is present on Ser229. Low complexity predominate over residues 241-253 (QQQQQQQQQQQQQ). The segment covering 269-282 (KDNKESKRESRVSP) has biased composition (basic and acidic residues). Polar residues predominate over residues 299 to 312 (KTSTFSSGSHDSNL).

It localises to the cytoplasm. The protein resides in the nucleus. This is J protein JJJ2 (JJJ2) from Saccharomyces cerevisiae (strain YJM789) (Baker's yeast).